The following is a 64-amino-acid chain: Disintegrin lebein-1-beta (64 aa).

Residues 1 to 64 enclose the Disintegrin domain; sequence NSGNPCCDPV…SDCPRNPYKD (64 aa). 4 disulfides stabilise this stretch: Cys6-Cys29, Cys20-Cys26, Cys25-Cys50, and Cys38-Cys57. A Cell attachment site motif is present at residues 42–44; the sequence is RGD.

This sequence belongs to the disintegrin family. Dimeric disintegrin subfamily. Heterodimer with subunit alpha; disulfide-linked. In terms of tissue distribution, expressed by the venom gland.

The protein resides in the secreted. In terms of biological role, strongly inhibits ADP-induced platelet aggregation on human platelet-rich plasma. Also avidly binds to the laminin-binding beta-1 integrins (alpha-3/beta-1, alpha-6/beta-1, and alpha-7/beta-1) in an RGD-independent manner. The sequence is that of Disintegrin lebein-1-beta from Macrovipera lebetinus (Levantine viper).